We begin with the raw amino-acid sequence, 428 residues long: 4-hydroxy-3-methylbut-2-en-1-yl diphosphate synthase (flavodoxin) (428 aa).

[4Fe-4S] cluster is bound by residues cysteine 300, cysteine 303, cysteine 346, and glutamate 353.

The protein belongs to the IspG family. Requires [4Fe-4S] cluster as cofactor.

It catalyses the reaction (2E)-4-hydroxy-3-methylbut-2-enyl diphosphate + oxidized [flavodoxin] + H2O + 2 H(+) = 2-C-methyl-D-erythritol 2,4-cyclic diphosphate + reduced [flavodoxin]. Its pathway is isoprenoid biosynthesis; isopentenyl diphosphate biosynthesis via DXP pathway; isopentenyl diphosphate from 1-deoxy-D-xylulose 5-phosphate: step 5/6. Its function is as follows. Converts 2C-methyl-D-erythritol 2,4-cyclodiphosphate (ME-2,4cPP) into 1-hydroxy-2-methyl-2-(E)-butenyl 4-diphosphate. This is 4-hydroxy-3-methylbut-2-en-1-yl diphosphate synthase (flavodoxin) from Methylobacillus flagellatus (strain ATCC 51484 / DSM 6875 / VKM B-1610 / KT).